The sequence spans 313 residues: Homoserine O-succinyltransferase (313 aa).

C142 (acyl-thioester intermediate) is an active-site residue. Residues K163 and S192 each coordinate substrate. The active-site Proton acceptor is the H235. E237 is a catalytic residue. Residue R249 coordinates substrate.

This sequence belongs to the MetA family.

Its subcellular location is the cytoplasm. It carries out the reaction L-homoserine + succinyl-CoA = O-succinyl-L-homoserine + CoA. Its pathway is amino-acid biosynthesis; L-methionine biosynthesis via de novo pathway; O-succinyl-L-homoserine from L-homoserine: step 1/1. Transfers a succinyl group from succinyl-CoA to L-homoserine, forming succinyl-L-homoserine. The sequence is that of Homoserine O-succinyltransferase from Vibrio parahaemolyticus serotype O3:K6 (strain RIMD 2210633).